The sequence spans 360 residues: Phospho-N-acetylmuramoyl-pentapeptide-transferase (360 aa).

Helical transmembrane passes span 26-46 (AILA…KLIE), 74-94 (MGGL…GDLG), 97-117 (YVWV…IDDY), 132-152 (WKYI…FYST), 168-188 (ILPQ…VGAS), 199-219 (GLAI…AYLS), 236-256 (SGEL…FLWF), 263-283 (VFMG…IAVL), 288-308 (ILLV…ILQV), and 338-358 (VIVR…ATLK).

The protein belongs to the glycosyltransferase 4 family. MraY subfamily. The cofactor is Mg(2+).

Its subcellular location is the cell inner membrane. It catalyses the reaction UDP-N-acetyl-alpha-D-muramoyl-L-alanyl-gamma-D-glutamyl-meso-2,6-diaminopimeloyl-D-alanyl-D-alanine + di-trans,octa-cis-undecaprenyl phosphate = di-trans,octa-cis-undecaprenyl diphospho-N-acetyl-alpha-D-muramoyl-L-alanyl-D-glutamyl-meso-2,6-diaminopimeloyl-D-alanyl-D-alanine + UMP. It participates in cell wall biogenesis; peptidoglycan biosynthesis. In terms of biological role, catalyzes the initial step of the lipid cycle reactions in the biosynthesis of the cell wall peptidoglycan: transfers peptidoglycan precursor phospho-MurNAc-pentapeptide from UDP-MurNAc-pentapeptide onto the lipid carrier undecaprenyl phosphate, yielding undecaprenyl-pyrophosphoryl-MurNAc-pentapeptide, known as lipid I. The protein is Phospho-N-acetylmuramoyl-pentapeptide-transferase of Shewanella amazonensis (strain ATCC BAA-1098 / SB2B).